The sequence spans 726 residues: MGPTTATDTGARMKPTTVASAVHRVQMALYDGAAASREPLLRAAASLLSGPDYADVVTERSIADACGYPACPNPLPSEDARGKAAPRFRISLREHRVYDLEEARKFCSERCLVASAAFGASLPPDRPFGVSPDRLDALVALFEGGGGGGDDGGLALGFGASGDGKEVEEGRKVEIMEKEAAGTGEVTLQEWIGPSDAIEGYVPRRDRVVGGPKKEAKQNDACSAEQSSNINVDSRNASSGESGMVLTENTKAKKKEATKTPLKMFKQDEDNDMLSSCISDSIVKQLEDVVLEEKKDKKKNKAAKGTSRVGKSKPAKRPVGRDGHEVDFTSTIIMGDRGSEMMDHGALGQYNFSSSILANEQPSSSQYAAIDSVQAYTEELDELFSNAVNIAKDETSDDSGRCTLRSSLKAVGSKNAGHSVKWADENGSVLETSRAFVSHSSKSQESMDSSVRRESAEACAAALIEAAEAISSGTSEVEDAVSKAGIIILPDMVNQQQYNNDYDNDKDAGENEIFEIDRGVVKWPKKTVLLDTDMFDVDDSWHDTPPEGFSLTLSSFATMWAALFGWVSRSSLAYVYGLDESSMEDLLIAGGRECPQKRVLNDGHSSEIRRALDTCVCNALPVLVSNLRMQIPVSKLEITLGYLLDTMSFVDALPSLRSRQWQLMVLVLLDALSLHRLPALAPIMSDSKLLQKLLNSAQVSREEYDSMIDLLLPFGRSTQSQASLPS.

The RTR1-type zinc finger occupies 43 to 131 (AAASLLSGPD…LPPDRPFGVS (89 aa)). C66, C71, C107, and C111 together coordinate Zn(2+). A compositionally biased stretch (basic and acidic residues) spans 209-218 (VGGPKKEAKQ). Disordered stretches follow at residues 209–242 (VGGP…SGES) and 294–323 (KKDK…GRDG). The segment covering 220–241 (DACSAEQSSNINVDSRNASSGE) has biased composition (polar residues).

The protein belongs to the RPAP2 family.

The protein resides in the nucleus. The enzyme catalyses O-phospho-L-seryl-[protein] + H2O = L-seryl-[protein] + phosphate. It catalyses the reaction O-phospho-L-threonyl-[protein] + H2O = L-threonyl-[protein] + phosphate. Putative RNA polymerase II subunit B1 C-terminal domain (CTD) phosphatase involved in RNA polymerase II transcription regulation. The polypeptide is Putative RNA polymerase II subunit B1 CTD phosphatase RPAP2 homolog (Oryza sativa subsp. japonica (Rice)).